Reading from the N-terminus, the 141-residue chain is Acetyltransferase YpeA (141 aa).

Positions 1 to 141 (MEIRVFRQED…GKRLIEDEEY (141 aa)) constitute an N-acetyltransferase domain.

This sequence belongs to the acetyltransferase family. YpeA subfamily.

The sequence is that of Acetyltransferase YpeA from Salmonella choleraesuis (strain SC-B67).